Consider the following 349-residue polypeptide: Sterol-4-alpha-carboxylate 3-dehydrogenase ERG26, decarboxylating (349 aa).

Residues 11-17 (GGSGFLG), 62-63 (DL), and 84-86 (CAS) contribute to the NADP(+) site. Residues serine 124 and tyrosine 151 each coordinate substrate. NADP(+)-binding positions include tyrosine 151, lysine 155, and 179 to 182 (PAGI). The active-site Proton donor is lysine 155.

Belongs to the 3-beta-HSD family. In terms of assembly, heterotetramer of ERG25, ERG26, ERG27 and ERG28. ERG28 acts as a scaffold to tether ERG27 and other 4,4-demethylation-related enzymes, forming a demethylation enzyme complex, in the endoplasmic reticulum.

Its subcellular location is the endoplasmic reticulum membrane. The enzyme catalyses 4beta-methylzymosterol-4alpha-carboxylate + NADP(+) = 3-dehydro-4-methylzymosterol + CO2 + NADPH. Its pathway is steroid biosynthesis; zymosterol biosynthesis; zymosterol from lanosterol: step 4/6. With respect to regulation, inhibited by FR171456, a natural product with broad antifungal activity. In terms of biological role, sterol-4-alpha-carboxylate 3-dehydrogenase; part of the third module of ergosterol biosynthesis pathway that includes the late steps of the pathway. ERG26 is a catalytic component of the C-4 demethylation complex that catalyzes the oxidative decarboxylation that results in a reduction of the 3-beta-hydroxy group at the C-3 carbon to an oxo group. The third module or late pathway involves the ergosterol synthesis itself through consecutive reactions that mainly occur in the endoplasmic reticulum (ER) membrane. Firstly, the squalene synthase ERG9 catalyzes the condensation of 2 farnesyl pyrophosphate moieties to form squalene, which is the precursor of all steroids. Squalene synthase is crucial for balancing the incorporation of farnesyl diphosphate (FPP) into sterol and nonsterol isoprene synthesis. Secondly, the squalene epoxidase ERG1 catalyzes the stereospecific oxidation of squalene to (S)-2,3-epoxysqualene, which is considered to be a rate-limiting enzyme in steroid biosynthesis. Then, the lanosterol synthase ERG7 catalyzes the cyclization of (S)-2,3 oxidosqualene to lanosterol, a reaction that forms the sterol core. In the next steps, lanosterol is transformed to zymosterol through a complex process involving various demethylation, reduction and desaturation reactions. The lanosterol 14-alpha-demethylase ERG11 (also known as CYP51) catalyzes C14-demethylation of lanosterol to produce 4,4'-dimethyl cholesta-8,14,24-triene-3-beta-ol, which is critical for ergosterol biosynthesis. The C-14 reductase ERG24 reduces the C14=C15 double bond of 4,4-dimethyl-cholesta-8,14,24-trienol to produce 4,4-dimethyl-cholesta-8,24-dienol. 4,4-dimethyl-cholesta-8,24-dienol is substrate of the C-4 demethylation complex ERG25-ERG26-ERG27 in which ERG25 catalyzes the three-step monooxygenation required for the demethylation of 4,4-dimethyl and 4alpha-methylsterols, ERG26 catalyzes the oxidative decarboxylation that results in a reduction of the 3-beta-hydroxy group at the C-3 carbon to an oxo group, and ERG27 is responsible for the reduction of the keto group on the C-3. ERG28 has a role as a scaffold to help anchor ERG25, ERG26 and ERG27 to the endoplasmic reticulum and ERG29 regulates the activity of the iron-containing C4-methylsterol oxidase ERG25. Then, the sterol 24-C-methyltransferase ERG6 catalyzes the methyl transfer from S-adenosyl-methionine to the C-24 of zymosterol to form fecosterol. The C-8 sterol isomerase ERG2 catalyzes the reaction which results in unsaturation at C-7 in the B ring of sterols and thus converts fecosterol to episterol. The sterol-C5-desaturase ERG3 then catalyzes the introduction of a C-5 double bond in the B ring to produce 5-dehydroepisterol. The C-22 sterol desaturase ERG5 further converts 5-dehydroepisterol into ergosta-5,7,22,24(28)-tetraen-3beta-ol by forming the C-22(23) double bond in the sterol side chain. Finally, ergosta-5,7,22,24(28)-tetraen-3beta-ol is substrate of the C-24(28) sterol reductase ERG4 to produce ergosterol. This chain is Sterol-4-alpha-carboxylate 3-dehydrogenase ERG26, decarboxylating, found in Saccharomyces cerevisiae (strain ATCC 204508 / S288c) (Baker's yeast).